Reading from the N-terminus, the 1121-residue chain is PR domain zinc finger protein 10 (1121 aa).

2 disordered regions span residues Met1–Gln24 and Thr92–Trp125. Positions Val106–Asp124 are enriched in acidic residues. The SET domain maps to Leu173–Ala290. The interval Ile192–Glu295 is N-terminal PR domain; essential for transcriptional activation. The segment at Trp319–His341 adopts a C2H2-type 1 zinc-finger fold. 2 disordered regions span residues Arg350–Lys387 and Glu419–Thr473. Basic residues predominate over residues Pro351 to Lys374. C2H2-type zinc fingers lie at residues Phe500–His522, His529–His551, Tyr557–His579, Phe585–His608, Phe613–His635, Phe641–His664, Phe696–His719, Tyr741–His764, and Val803–His826. Positions Gln871–Gln1101 are C-terminal glutamine-rich region; essential for transcriptional activation. The disordered stretch occupies residues Val1077 to Gln1097.

This sequence belongs to the class V-like SAM-binding methyltransferase superfamily.

The protein resides in the nucleus. In terms of biological role, transcriptional activator, essential for early embryonic development and survival of embryonic stem cells (ESCs). Supports cell growth and survival during early development by transcriptionally activating the expression of the translation initiation factor EIF3B, to sustain global translation. Activates the transcription of FLNC. This chain is PR domain zinc finger protein 10 (prdm10), found in Danio rerio (Zebrafish).